We begin with the raw amino-acid sequence, 130 residues long: MAQAQYAGTGRRKNAVARVRLVPGTGKITINKKDVEEYIPHADLRLVINQPFAVTSTQGSYDVFVNVVGGGYAGQSGAIRHGISRALLEVDPDFRDSLKRAGLLTRDARMVERKKPGLKKARKASQFSKR.

This sequence belongs to the universal ribosomal protein uS9 family.

The protein is Small ribosomal subunit protein uS9 of Streptococcus agalactiae serotype Ia (strain ATCC 27591 / A909 / CDC SS700).